The sequence spans 49 residues: Large ribosomal subunit protein bL33B (49 aa).

This sequence belongs to the bacterial ribosomal protein bL33 family.

In Shouchella clausii (strain KSM-K16) (Alkalihalobacillus clausii), this protein is Large ribosomal subunit protein bL33B.